Consider the following 461-residue polypeptide: MSTAGVAAQDIRVPLKTGFLHNGQALGNMKSCWGSHSEFENNFLNIDPITMAYNLNSPAQEHLTTVGCAARSAPGSGHFFAECGPSPRSSLPPLVISPSESSGQREEDQVMCGFKKLSVNGVCTSTPPLTPIKSCPSPFPCAALCDRGSRPLPPLPISEDLCVDEADSEVELLTTSSDTDLLLEDSAPSDFKYDAPGRRSFRGCGQINYAYFDSPTVSVADLSCASDQNRVVPDPNPPPPQSHRRLRRSHSGPAGSFNKPAIRISSCTHRASPSSDEDKPEVPPRVPIPPRPAKPDYRRWSAEVTSNTYSDEDRPPKVPPREPLSRSNSRTPSPKSLPSYLNGVMPPTQSFAPDPKYVSSKALQRQSSEGSANKVPCILPIIENGKKVSSTHYYLLPERPPYLDKYEKYFKEAEETNPSTQIQPLPAACGMASATEKLASRMKIDMGSHGKRKHLSYVVSP.

Position 2 is an N-acetylserine (Ser-2). Thr-126 and Thr-130 each carry phosphothreonine. Positions 228 to 353 (QNRVVPDPNP…VMPPTQSFAP (126 aa)) are disordered. Phosphoserine is present on residues Ser-251 and Ser-272. Positions 265–274 (SSCTHRASPS) are enriched in polar residues. Residues 283 to 292 (PPRVPIPPRP) are compositionally biased toward pro residues. Position 301 is a phosphoserine (Ser-301). Basic and acidic residues predominate over residues 311 to 324 (DEDRPPKVPPREPL). Positions 325–336 (SRSNSRTPSPKS) are enriched in polar residues. The interval 333 to 362 (SPKSLPSYLNGVMPPTQSFAPDPKYVSSKA) is interaction with EGFR and ERBB2 and regulation of EGFR activation. At Ser-460 the chain carries Phosphoserine.

It belongs to the MIG6 family. As to quaternary structure, interacts with EGFR. Interacts with ERBB2. In terms of tissue distribution, detected in lung, in airway epithelial cells and alveolar type 2 cells (at protein level). Detected in uterus stroma, luminal epithelium and glandular epithelium.

It is found in the cytoplasm. Its subcellular location is the cell membrane. The protein resides in the nucleus. Its function is as follows. Negative regulator of EGFR signaling in skin morphogenesis. Acts as a negative regulator for several EGFR family members, including ERBB2, ERBB3 and ERBB4. Inhibits EGFR catalytic activity by interfering with its dimerization. Inhibits autophosphorylation of EGFR, ERBB2 and ERBB4. Important for normal keratinocyte proliferation and differentiation. Plays a role in modulating the response to steroid hormones in the uterus. Required for normal response to progesterone in the uterus and for fertility. Mediates epithelial estrogen responses in the uterus by regulating ESR1 levels and activation. Important for regulation of endometrium cell proliferation. Important for normal prenatal and perinatal lung development. This chain is ERBB receptor feedback inhibitor 1 (Errfi1), found in Mus musculus (Mouse).